A 310-amino-acid chain; its full sequence is Ribosomal RNA small subunit methyltransferase H (310 aa).

Residues 33–35 (AGH), aspartate 53, tyrosine 83, aspartate 100, and glutamine 107 each bind S-adenosyl-L-methionine.

This sequence belongs to the methyltransferase superfamily. RsmH family.

It localises to the cytoplasm. It catalyses the reaction cytidine(1402) in 16S rRNA + S-adenosyl-L-methionine = N(4)-methylcytidine(1402) in 16S rRNA + S-adenosyl-L-homocysteine + H(+). Functionally, specifically methylates the N4 position of cytidine in position 1402 (C1402) of 16S rRNA. In Clostridium perfringens (strain ATCC 13124 / DSM 756 / JCM 1290 / NCIMB 6125 / NCTC 8237 / Type A), this protein is Ribosomal RNA small subunit methyltransferase H.